An 806-amino-acid polypeptide reads, in one-letter code: MNYNHNQIEKKWQDYWDENKTFKTNDNLGQKKFYALDMFPYPSGAGLHVGHPEGYTATDIISRYKRMQGYNVLHPMGWDAFGLPAEQYALDTGNDPREFTKKNIQTFKRQIKELGFSYDWDREVNTTDPEYYKWTQWIFIQLYNKGLAYVDEVAVNWCPALGTVLSNEEVIDGVSERGGHPVYRKPMKQWVLKITEYADQLLADLDDLDWPESLKDMQRNWIGRSEGAKVSFDVDNTEAEGKVEVFTTRPDTIYGASFLVLSPEHALVNSITTDEYKEKVKAYQTEASKKSDLERTDLAKDKSGVFTGAYAINPLSGEKVQIWIADYVLSTYGTGAIMAVPAHDDRDYEFAKKFDLPIIEVIEGGNVEEAAYTGEGKHINSGELDGLENEAAITKAIQLLEQKGAGEKKVNYKLRDWLFSRQRYWGEPIPVIHWEDGTMTTVPEEELPLLLPETDEIKPSGTGESPLANIDSFVNVVDEKTGMKGRRETNTMPQWAGSCWYYLRYIDPKNENMLADPEKLKHWLPVDLYIGGVEHAVLHLLYARFWHKVLYDLGIVPTKEPFQKLFNQGMILGEGNEKMSKSKGNVINPDDIVQSHGADTLRLYEMFMGPLDAAIAWSEKGLDGSRRFLDRVWRLMVNEDGTLSSKIVTTNNKSLDKVYNQTVKKVTEDFETLGFNTAISQLMVFINECYKVDEVYKPYIEGFVKMLAPIAPHIGEELWSKLGHEESITYQPWPTYDEALLVDDEVEIVVQVNGKLRAKIKIAKDTSKEEMQEIALSNDNVKASIEGKDIMKVIAVPQKLVNIVAK.

A 'HIGH' region motif is present at residues 40-51; sequence PYPSGAGLHVGH. The short motif at 578–582 is the 'KMSKS' region element; the sequence is KMSKS. Lysine 581 is a binding site for ATP.

Belongs to the class-I aminoacyl-tRNA synthetase family.

It localises to the cytoplasm. It catalyses the reaction tRNA(Leu) + L-leucine + ATP = L-leucyl-tRNA(Leu) + AMP + diphosphate. In Staphylococcus aureus (strain MSSA476), this protein is Leucine--tRNA ligase.